The following is a 213-amino-acid chain: Large ribosomal subunit protein uL1 (213 aa).

The protein belongs to the universal ribosomal protein uL1 family.

This is Large ribosomal subunit protein uL1 (RPL10A) from Chlamydomonas reinhardtii (Chlamydomonas smithii).